Reading from the N-terminus, the 101-residue chain is Small ribosomal subunit protein uS14 (101 aa).

It belongs to the universal ribosomal protein uS14 family. In terms of assembly, part of the 30S ribosomal subunit. Contacts proteins S3 and S10.

Functionally, binds 16S rRNA, required for the assembly of 30S particles and may also be responsible for determining the conformation of the 16S rRNA at the A site. The protein is Small ribosomal subunit protein uS14 of Cellvibrio japonicus (strain Ueda107) (Pseudomonas fluorescens subsp. cellulosa).